The primary structure comprises 218 residues: NADH dehydrogenase [ubiquinone] iron-sulfur protein 7, mitochondrial (218 aa).

Residues Leu-34–Arg-48 are compositionally biased toward low complexity. A disordered region spans residues Leu-34–Leu-61. Over residues Pro-49–Gly-60 the composition is skewed to pro residues. Cys-93, Cys-94, Cys-158, and Cys-188 together coordinate [4Fe-4S] cluster.

Belongs to the complex I 20 kDa subunit family. In terms of assembly, complex I is composed of at least 49 different subunits. This is a component of the iron-sulfur (IP) fragment of the enzyme. Requires [4Fe-4S] cluster as cofactor.

Its subcellular location is the mitochondrion. It catalyses the reaction a ubiquinone + NADH + 5 H(+)(in) = a ubiquinol + NAD(+) + 4 H(+)(out). Functionally, core subunit of the mitochondrial membrane respiratory chain NADH dehydrogenase (Complex I) that is believed to belong to the minimal assembly required for catalysis. Complex I functions in the transfer of electrons from NADH to the respiratory chain. The immediate electron acceptor for the enzyme is believed to be ubiquinone. The sequence is that of NADH dehydrogenase [ubiquinone] iron-sulfur protein 7, mitochondrial from Arabidopsis thaliana (Mouse-ear cress).